Consider the following 99-residue polypeptide: Ragulator complex protein LAMTOR4 (99 aa).

The residue at position 1 (M1) is an N-acetylmethionine. An N-acetylthreonine; in Ragulator complex protein LAMTOR4, N-terminally processed modification is found at T2. S67 is subject to Phosphoserine; by PKA.

It belongs to the LAMTOR4 family. Part of the Ragulator complex composed of LAMTOR1, LAMTOR2, LAMTOR3, LAMTOR4 and LAMTOR5. LAMTOR4 and LAMTOR5 form a heterodimer that interacts, through LAMTOR1, with a LAMTOR2, LAMTOR3 heterodimer. The Ragulator complex interacts with both the mTORC1 complex and heterodimers constituted of the Rag GTPases RagA/RRAGA, RagB/RRAGB, RagC/RRAGC and RagD/RRAGD; regulated by amino acid availability. The Ragulator complex interacts with SLC38A9; the probable amino acid sensor. Component of the lysosomal folliculin complex (LFC), composed of FLCN, FNIP1 (or FNIP2), RagA/RRAGA or RagB/RRAGB GDP-bound, RagC/RRAGC or RagD/RRAGD GTP-bound, and Ragulator. In terms of processing, phosphorylation at Ser-67 by PKA inhibits Ragulator complex assembly.

The protein resides in the lysosome. Its function is as follows. As part of the Ragulator complex it is involved in amino acid sensing and activation of mTORC1, a signaling complex promoting cell growth in response to growth factors, energy levels, and amino acids. Activated by amino acids through a mechanism involving the lysosomal V-ATPase, the Ragulator plays a dual role for the small GTPases Rag (RagA/RRAGA, RagB/RRAGB, RagC/RRAGC and/or RagD/RRAGD): it (1) acts as a guanine nucleotide exchange factor (GEF), activating the small GTPases Rag and (2) mediates recruitment of Rag GTPases to the lysosome membrane. Activated Ragulator and Rag GTPases function as a scaffold recruiting mTORC1 to lysosomes where it is in turn activated. This is Ragulator complex protein LAMTOR4 from Homo sapiens (Human).